The following is a 342-amino-acid chain: Aquaporin-8 (342 aa).

The next 3 helical transmembrane spans lie at 55 to 75 (FLAV…AIFT), 98 to 118 (VAGG…FAVL), and 126 to 146 (CIFY…TMFA). Positions 108–110 (NPA) match the NPA 1 motif. N-linked (GlcNAc...) asparagine glycosylation occurs at Asn-166. 2 consecutive transmembrane segments (helical) span residues 184-204 (TAFA…LAMC) and 215-235 (FLPI…SYNA). Positions 240–242 (NPS) match the NPA 2 motif. Residues 266–286 (YTWFFVPVLGSHCGAIIGGAI) traverse the membrane as a helical segment. Positions 302–327 (TNSVSSMSYNEDNSTLTKRKQVSNIV) are enriched in polar residues. The disordered stretch occupies residues 302-342 (TNSVSSMSYNEDNSTLTKRKQVSNIVHDSKGAKGSSTAPVN). Asn-314 is a glycosylation site (N-linked (GlcNAc...) asparagine).

Belongs to the MIP/aquaporin (TC 1.A.8) family.

The protein localises to the cell membrane. Functionally, aquaglyceroporin that may modulate the water content and osmolytes during anhydrobiosis. This Milnesium tardigradum (Water bear) protein is Aquaporin-8.